The following is a 308-amino-acid chain: Glutamyl-Q tRNA(Asp) synthetase (308 aa).

L-glutamate-binding positions include 19–23 (RFAPS) and Glu-55. The 'HIGH' region motif lies at 22-32 (PSPSGELHFGS). Residues Cys-111, Cys-113, Tyr-125, and Cys-129 each contribute to the Zn(2+) site. L-glutamate-binding residues include Tyr-182 and Arg-200. The 'KMSKS' region motif lies at 238–242 (KLSKQ). ATP is bound at residue Lys-241.

It belongs to the class-I aminoacyl-tRNA synthetase family. GluQ subfamily. Requires Zn(2+) as cofactor.

Functionally, catalyzes the tRNA-independent activation of glutamate in presence of ATP and the subsequent transfer of glutamate onto a tRNA(Asp). Glutamate is transferred on the 2-amino-5-(4,5-dihydroxy-2-cyclopenten-1-yl) moiety of the queuosine in the wobble position of the QUC anticodon. The polypeptide is Glutamyl-Q tRNA(Asp) synthetase (Escherichia coli (strain K12 / MC4100 / BW2952)).